A 585-amino-acid chain; its full sequence is MAGUK p55 subfamily member 3 (585 aa).

L27 domains follow at residues Glu-6–Ser-60 and Pro-61–Val-118. The 82-residue stretch at Ile-137–Thr-218 folds into the PDZ domain. The region spanning Glu-226–Leu-296 is the SH3 domain. Ser-307 carries the phosphoserine modification. The region spanning Ser-385 to Glu-570 is the Guanylate kinase-like domain. The interval Lys-510–Gln-530 is disordered.

Belongs to the MAGUK family. As to quaternary structure, interacts with HTR2C; this interaction stabilizes the receptor at the plasma membrane and prevents the desensitization of the HTR2C receptor-mediated calcium response. Interacts with HTR2A. Interacts with HTR4. Interacts (via PDZ domain) with CADM1 (via C-terminus)Interacts (via PDZ domain) with CADM1; this interaction connects CADM1 with DLG1. Interacts (via Guanylate kinase-like domain) with PALS1. Interacts with DLG1 (via N-terminus); this interaction connects CADM1 with DLG1 and links CADM1 with the regulatory subunit of phosphoinositide-3-kinase (PI3K) by forming a multiprotein complex and participates in cell spreading.

The protein localises to the apical cell membrane. Its subcellular location is the cell membrane. The protein resides in the cell junction. It is found in the adherens junction. In terms of biological role, participates in cell spreading through the phosphoinositide-3-kinase (PI3K) pathway by connecting CADM1 to DLG1 and the regulatory subunit of phosphoinositide-3-kinase (PI3K). Stabilizes HTR2C at the plasma membrane and prevents its desensitization. May participates in the maintenance of adherens junctions. The polypeptide is MAGUK p55 subfamily member 3 (Rattus norvegicus (Rat)).